Consider the following 232-residue polypeptide: Ribonuclease 3 (232 aa).

Residues 5-134 (QTVLKNHFAI…FLGALLLDKD (130 aa)) enclose the RNase III domain. Glutamate 47 contributes to the Mg(2+) binding site. Aspartate 51 is an active-site residue. Mg(2+)-binding residues include aspartate 120 and glutamate 123. Residue glutamate 123 is part of the active site. The DRBM domain occupies 160-229 (DYKTHLQELL…AKNAVEKGLD (70 aa)).

It belongs to the ribonuclease III family. As to quaternary structure, homodimer. The cofactor is Mg(2+).

Its subcellular location is the cytoplasm. It catalyses the reaction Endonucleolytic cleavage to 5'-phosphomonoester.. Its function is as follows. Digests double-stranded RNA. Involved in the processing of primary rRNA transcript to yield the immediate precursors to the large and small rRNAs (23S and 16S). Processes some mRNAs, and tRNAs when they are encoded in the rRNA operon. Processes pre-crRNA and tracrRNA of type II CRISPR loci if present in the organism. This is Ribonuclease 3 from Streptococcus pneumoniae (strain CGSP14).